Here is a 149-residue protein sequence, read N- to C-terminus: Cell division protein SepF (149 aa).

Belongs to the SepF family. In terms of assembly, homodimer. Interacts with FtsZ.

It is found in the cytoplasm. In terms of biological role, cell division protein that is part of the divisome complex and is recruited early to the Z-ring. Probably stimulates Z-ring formation, perhaps through the cross-linking of FtsZ protofilaments. Its function overlaps with FtsA. The protein is Cell division protein SepF of Pelotomaculum thermopropionicum (strain DSM 13744 / JCM 10971 / SI).